Reading from the N-terminus, the 186-residue chain is GTP cyclohydrolase 1 1 (186 aa).

The protein belongs to the GTP cyclohydrolase I family. In terms of assembly, homomer.

The catalysed reaction is GTP + H2O = 7,8-dihydroneopterin 3'-triphosphate + formate + H(+). It participates in cofactor biosynthesis; 7,8-dihydroneopterin triphosphate biosynthesis; 7,8-dihydroneopterin triphosphate from GTP: step 1/1. This chain is GTP cyclohydrolase 1 1 (folE1), found in Pseudomonas aeruginosa (strain ATCC 15692 / DSM 22644 / CIP 104116 / JCM 14847 / LMG 12228 / 1C / PRS 101 / PAO1).